The following is a 506-amino-acid chain: Tabersonine 16-hydroxylase 1 (506 aa).

A helical membrane pass occupies residues 1–21 (MEFYYFLYLAFLLFCFILSKT). Cys-447 lines the heme pocket.

It belongs to the cytochrome P450 family. Heme is required as a cofactor. As to expression, predominantly expressed in young leaves of mature plants. Low expression in roots and flowers, but not detected in stems and old leaves. Found predominantly in leaf epidermis. Barely detected in roots, internodes, young and mature leaves, and flower buds, but relatively abundant in fully developed flowers. Not detected in leaf epidermal cells.

The protein localises to the endoplasmic reticulum membrane. It catalyses the reaction (-)-tabersonine + reduced [NADPH--hemoprotein reductase] + O2 = 16-hydroxytabersonine + oxidized [NADPH--hemoprotein reductase] + H2O + H(+). Its pathway is alkaloid biosynthesis; vindoline biosynthesis. Involved in the flower biosynthesis of vindoline, a precursor of vinblastine and vincristine. Hydroxylates specifically tabersonine, 2,3-dihydrotabersonine and 2,3-dihydro-3-hydroxytabersonine, but has no activity with naringenin, tryptamine, secologanin, strictosidine, ajmalicine, vindoline and catharanthine. The polypeptide is Tabersonine 16-hydroxylase 1 (Catharanthus roseus (Madagascar periwinkle)).